Reading from the N-terminus, the 433-residue chain is D-amino acid dehydrogenase (433 aa).

3–17 (VLVLGSGVIGTTSAY) is an FAD binding site.

It belongs to the DadA oxidoreductase family. The cofactor is FAD.

It carries out the reaction a D-alpha-amino acid + A + H2O = a 2-oxocarboxylate + AH2 + NH4(+). The protein operates within amino-acid degradation; D-alanine degradation; NH(3) and pyruvate from D-alanine: step 1/1. Functionally, oxidative deamination of D-amino acids. The polypeptide is D-amino acid dehydrogenase (Pseudomonas savastanoi pv. phaseolicola (strain 1448A / Race 6) (Pseudomonas syringae pv. phaseolicola (strain 1448A / Race 6))).